The primary structure comprises 709 residues: MESPTKEIEEFESNSLKYLQPEQIEKIWLRLRGLRKYKKTSQRLRSLVKQLERGEASVVDLKKNLEYAATVLESVYIDETRRLLDTEDELSDIQSDAVPSEVRDWLASTFTRQMGMMLRRSDEKPRFKSIVHAVQAGIFVERMYRRTSNMVGLSYPPAVIEALKDVDKWSFDVFSLNEASGDHALKFIFYELLTRYDLISRFKIPISALVSFVEALEVGYSKHKNPYHNLMHAADVTQTVHYLLYKTGVANWLTELEIFAIIFSAAIHDYEHTGTTNNFHIQTRSDPAILYNDRSVLENHHLSAAYRLLQDDEEMNILINLSKDDWREFRTLVIEMVMATDMSCHFQQIKAMKTALQQPEAIEKPKALSLMLHTADISHPAKAWDLHHRWTMSLLEEFFRQGDREAELGLPFSPLCDRKSTMVAQSQVGFIDFIVEPTFTVLTDMTEKIVSPLIDETSQTGGTGQRRSSLNSISSSDAKRSGVKTSGSEGSAPINNSVISVDYKSFKATWTEVVHINRERWRAKVPKEEKAKKEAEEKARLAAEEQQKEMEAKSQAEEGASGKAEKKTSGETKNQVNGTRANKSDNPRGKNSKAEKSSGEQQQNGDFKDGKNKTDKKDHSNIGNDSKKTDGTKQRSHGSPAPSTSSTCRLTLPVIKPPLRHFKRPAYASSSYAPSVSKKTDEHPARYKMLDQRIKMKKIQNISHNWNRK.

Position 1 is an N-acetylmethionine (Met1). Residues 123–146 are calmodulin-binding; the sequence is EKPRFKSIVHAVQAGIFVERMYRR. The PDEase domain occupies 151-528; it reads VGLSYPPAVI…ERWRAKVPKE (378 aa). The active-site Proton donor is the His228. Residues His232, His268, Asp269, and Asp376 each contribute to the Zn(2+) site. Position 269 (Asp269) interacts with Mg(2+). Disordered regions lie at residues 453–495 and 523–650; these read LIDE…APIN and AKVP…TCRL. The segment covering 483–495 has biased composition (polar residues); the sequence is VKTSGSEGSAPIN. The segment covering 523–556 has biased composition (basic and acidic residues); it reads AKVPKEEKAKKEAEEKARLAAEEQQKEMEAKSQA. Residues 571-581 show a composition bias toward polar residues; it reads ETKNQVNGTRA. Basic and acidic residues-rich tracts occupy residues 582 to 598 and 606 to 633; these read NKSD…EKSS and DFKD…DGTK.

Belongs to the cyclic nucleotide phosphodiesterase family. PDE1 subfamily. Homodimer. Requires Zn(2+) as cofactor. Mg(2+) is required as a cofactor. In terms of tissue distribution, isoform PDE1C2 is present in the heart and brain and, at lower levels in the lung, liver, kidney and skeletal muscle. Isoform PDE1C1 is expressed in the heart and brain and, at lower levels in lung. Also expressed at low levels in uterus and testis.

It localises to the lysosome. It catalyses the reaction a nucleoside 3',5'-cyclic phosphate + H2O = a nucleoside 5'-phosphate + H(+). The enzyme catalyses 3',5'-cyclic GMP + H2O = GMP + H(+). It carries out the reaction 3',5'-cyclic AMP + H2O = AMP + H(+). Type I PDE are activated by the binding of calmodulin in the presence of Ca(2+). Calmodulin-dependent cyclic nucleotide phosphodiesterase with a dual specificity for the second messengers cAMP and cGMP, which are key regulators of many important physiological processes. Has a high affinity for both cAMP and cGMP. Modulates the amplitude and duration of the cAMP signal in sensory cilia in response to odorant stimulation, hence contributing to the generation of action potentials. Regulates smooth muscle cell proliferation. Regulates the stability of growth factor receptors, including PDGFRB. The protein is Dual specificity calcium/calmodulin-dependent 3',5'-cyclic nucleotide phosphodiesterase 1C of Homo sapiens (Human).